Here is a 175-residue protein sequence, read N- to C-terminus: Peptide deformylase 1 (175 aa).

Residues C99 and H141 each contribute to the Fe cation site. E142 is an active-site residue. A Fe cation-binding site is contributed by H145.

This sequence belongs to the polypeptide deformylase family. Requires Fe(2+) as cofactor.

The enzyme catalyses N-terminal N-formyl-L-methionyl-[peptide] + H2O = N-terminal L-methionyl-[peptide] + formate. Its function is as follows. Removes the formyl group from the N-terminal Met of newly synthesized proteins. Requires at least a dipeptide for an efficient rate of reaction. N-terminal L-methionine is a prerequisite for activity but the enzyme has broad specificity at other positions. The polypeptide is Peptide deformylase 1 (Rickettsia conorii (strain ATCC VR-613 / Malish 7)).